We begin with the raw amino-acid sequence, 529 residues long: Cytochrome P450 monooxygenase 45 (529 aa).

Residues 24-44 (VLTICILALLTFVLREIVLYF) traverse the membrane as a helical segment. N-linked (GlcNAc...) asparagine glycans are attached at residues N185 and N322. C454 contributes to the heme binding site.

This sequence belongs to the cytochrome P450 family. It depends on heme as a cofactor.

The protein resides in the membrane. It functions in the pathway secondary metabolite biosynthesis. Cytochrome P450 monooxygenase that is able to use trans-stilbene as a substrate for oxidation. The protein is Cytochrome P450 monooxygenase 45 of Postia placenta (strain ATCC 44394 / Madison 698-R) (Brown rot fungus).